The chain runs to 319 residues: ATP-dependent 6-phosphofructokinase (319 aa).

Gly11 contacts ATP. An ADP-binding site is contributed by 21–25; the sequence is RAVVR. Residues 72–73 and 102–105 contribute to the ATP site; these read RC and GEGS. Glu103 contacts Mg(2+). 126-128 is a substrate binding site; sequence TID. The active-site Proton acceptor is Asp128. Lys155 contacts ADP. Residues Arg163 and 170-172 contribute to the substrate site; that span reads MGR. ADP contacts are provided by residues 186 to 188, Arg212, and 214 to 216; these read GAE and KIN. Substrate contacts are provided by residues Glu223, Arg244, and 250–253; that span reads HVQR.

Belongs to the phosphofructokinase type A (PFKA) family. ATP-dependent PFK group I subfamily. Prokaryotic clade 'B1' sub-subfamily. Homotetramer. The cofactor is Mg(2+).

It is found in the cytoplasm. It carries out the reaction beta-D-fructose 6-phosphate + ATP = beta-D-fructose 1,6-bisphosphate + ADP + H(+). Its pathway is carbohydrate degradation; glycolysis; D-glyceraldehyde 3-phosphate and glycerone phosphate from D-glucose: step 3/4. Allosterically activated by ADP and other diphosphonucleosides, and allosterically inhibited by phosphoenolpyruvate. Functionally, catalyzes the phosphorylation of D-fructose 6-phosphate to fructose 1,6-bisphosphate by ATP, the first committing step of glycolysis. The polypeptide is ATP-dependent 6-phosphofructokinase (Thermotoga neapolitana (strain ATCC 49049 / DSM 4359 / NBRC 107923 / NS-E)).